The primary structure comprises 494 residues: Cytochrome P450 2G1 (494 aa).

Cys439 is a binding site for heme.

This sequence belongs to the cytochrome P450 family. It depends on heme as a cofactor. In terms of tissue distribution, olfactory epithelium.

It localises to the endoplasmic reticulum membrane. It is found in the microsome membrane. The catalysed reaction is an organic molecule + reduced [NADPH--hemoprotein reductase] + O2 = an alcohol + oxidized [NADPH--hemoprotein reductase] + H2O + H(+). In terms of biological role, cytochromes P450 are a group of heme-thiolate monooxygenases. This isozyme seems to be implicated in olfaction. This is Cytochrome P450 2G1 (Cyp2g1) from Rattus norvegicus (Rat).